Here is a 726-residue protein sequence, read N- to C-terminus: NHL repeat-containing protein 2 (726 aa).

NHL repeat units lie at residues 212–254 (KLYK…VWKN), 265–307 (NPGR…IDLE), 335–369 (ISSPWDVVFGRSGPEVQRDNILWIAMAGTHQIWAL), 409–439 (FAQPSGLSLASEGPWSCLFVADSESSTVRTV), 461–505 (AFGD…VDPK), and 518–562 (ASNM…LDLE).

In terms of assembly, monomer.

The protein resides in the cytoplasm. It is found in the cytosol. In terms of biological role, required for normal embryonic development. The protein is NHL repeat-containing protein 2 (NHLRC2) of Bos taurus (Bovine).